Consider the following 185-residue polypeptide: Ribosome-recycling factor (185 aa).

The interval 140–166 (KRQEKDGDITEDEQRSLEKQVQKVTDD) is disordered.

This sequence belongs to the RRF family.

The protein localises to the cytoplasm. Responsible for the release of ribosomes from messenger RNA at the termination of protein biosynthesis. May increase the efficiency of translation by recycling ribosomes from one round of translation to another. This chain is Ribosome-recycling factor, found in Lactobacillus johnsonii (strain CNCM I-12250 / La1 / NCC 533).